Reading from the N-terminus, the 195-residue chain is E3 ubiquitin-protein ligase ZNRF1 (195 aa).

The segment covering Met-1–Arg-10 has biased composition (polar residues). 2 disordered regions span residues Met-1–Ala-36 and Pro-61–Gly-84. A lipid anchor (N-myristoyl glycine) is attached at Gly-2. The segment covering Val-18–Ser-29 has biased composition (low complexity). An RING-type; atypical zinc finger spans residues Cys-152–Pro-193.

The protein localises to the endosome. Its subcellular location is the lysosome. The protein resides in the membrane. It carries out the reaction S-ubiquitinyl-[E2 ubiquitin-conjugating enzyme]-L-cysteine + [acceptor protein]-L-lysine = [E2 ubiquitin-conjugating enzyme]-L-cysteine + N(6)-ubiquitinyl-[acceptor protein]-L-lysine.. It participates in protein modification; protein ubiquitination. In terms of biological role, E3 ubiquitin-protein ligase that plays a role in neuron cells differentiation. Plays a role in the establishment and maintenance of neuronal transmission and plasticity. The polypeptide is E3 ubiquitin-protein ligase ZNRF1 (znrf1) (Xenopus tropicalis (Western clawed frog)).